Here is a 542-residue protein sequence, read N- to C-terminus: CTP synthase (542 aa).

The segment at 1 to 265 is amidoligase domain; that stretch reads MTRYIFVTGG…DQLVIERFGL (265 aa). Residue Ser-13 coordinates CTP. Ser-13 contacts UTP. ATP-binding positions include 14 to 19 and Asp-71; that span reads SLGKGI. Mg(2+) contacts are provided by Asp-71 and Glu-139. Residues 146 to 148, 186 to 191, and Lys-222 each bind CTP; these read DIE and KTKPTQ. UTP contacts are provided by residues 186–191 and Lys-222; that span reads KTKPTQ. Positions 290–541 constitute a Glutamine amidotransferase type-1 domain; the sequence is TIAMVGKYME…VEAALANKKG (252 aa). Residue Gly-351 coordinates L-glutamine. Cys-378 acts as the Nucleophile; for glutamine hydrolysis in catalysis. L-glutamine is bound by residues 379-382, Glu-402, and Arg-469; that span reads LGMQ. Active-site residues include His-514 and Glu-516.

It belongs to the CTP synthase family. Homotetramer.

It catalyses the reaction UTP + L-glutamine + ATP + H2O = CTP + L-glutamate + ADP + phosphate + 2 H(+). The catalysed reaction is L-glutamine + H2O = L-glutamate + NH4(+). The enzyme catalyses UTP + NH4(+) + ATP = CTP + ADP + phosphate + 2 H(+). The protein operates within pyrimidine metabolism; CTP biosynthesis via de novo pathway; CTP from UDP: step 2/2. Allosterically activated by GTP, when glutamine is the substrate; GTP has no effect on the reaction when ammonia is the substrate. The allosteric effector GTP functions by stabilizing the protein conformation that binds the tetrahedral intermediate(s) formed during glutamine hydrolysis. Inhibited by the product CTP, via allosteric rather than competitive inhibition. Functionally, catalyzes the ATP-dependent amination of UTP to CTP with either L-glutamine or ammonia as the source of nitrogen. Regulates intracellular CTP levels through interactions with the four ribonucleotide triphosphates. The sequence is that of CTP synthase from Marinobacter nauticus (strain ATCC 700491 / DSM 11845 / VT8) (Marinobacter aquaeolei).